We begin with the raw amino-acid sequence, 241 residues long: MGQKINPIGLRLGINRTWDSRWFAGKQEYGKLLHEDVKIREILHKELKQAAVARIVIERPHKKCRVTIHSARPGVVIGKKGADIDKLRKRVADITSSDVVINIVEIRKPELDATLVAESIAQQLERRVAFRRAMKRAVQSAMRLGAEGIRINCSGRLGGAEIARMEWYREGRVPLHTLRADIDYGVATAFTTFGTCGVKVWIFKGEILEHDPMAQDKRMAEGETGGGGDRGGRQRRDNAAV.

One can recognise a KH type-2 domain in the interval 39 to 107 (IREILHKELK…DVVINIVEIR (69 aa)). Residues 217-241 (KRMAEGETGGGGDRGGRQRRDNAAV) form a disordered region. Positions 230–241 (RGGRQRRDNAAV) are enriched in basic and acidic residues.

The protein belongs to the universal ribosomal protein uS3 family. In terms of assembly, part of the 30S ribosomal subunit. Forms a tight complex with proteins S10 and S14.

In terms of biological role, binds the lower part of the 30S subunit head. Binds mRNA in the 70S ribosome, positioning it for translation. The polypeptide is Small ribosomal subunit protein uS3 (Bradyrhizobium diazoefficiens (strain JCM 10833 / BCRC 13528 / IAM 13628 / NBRC 14792 / USDA 110)).